The following is a 253-amino-acid chain: Tryptophan synthase alpha chain (253 aa).

Catalysis depends on proton acceptor residues E47 and D58.

This sequence belongs to the TrpA family. As to quaternary structure, tetramer of two alpha and two beta chains.

It catalyses the reaction (1S,2R)-1-C-(indol-3-yl)glycerol 3-phosphate + L-serine = D-glyceraldehyde 3-phosphate + L-tryptophan + H2O. Its pathway is amino-acid biosynthesis; L-tryptophan biosynthesis; L-tryptophan from chorismate: step 5/5. Its function is as follows. The alpha subunit is responsible for the aldol cleavage of indoleglycerol phosphate to indole and glyceraldehyde 3-phosphate. The polypeptide is Tryptophan synthase alpha chain (Lactococcus lactis subsp. lactis (strain IL1403) (Streptococcus lactis)).